The primary structure comprises 559 residues: NAD-dependent malic enzyme 2 (559 aa).

The active-site Proton donor is the tyrosine 98. Arginine 151 provides a ligand contact to NAD(+). Catalysis depends on lysine 169, which acts as the Proton acceptor. 3 residues coordinate a divalent metal cation: glutamate 240, aspartate 241, and aspartate 264. 2 residues coordinate NAD(+): aspartate 264 and asparagine 413.

It belongs to the malic enzymes family. As to quaternary structure, homotetramer. It depends on Mg(2+) as a cofactor. Mn(2+) serves as cofactor.

The catalysed reaction is (S)-malate + NAD(+) = pyruvate + CO2 + NADH. It catalyses the reaction oxaloacetate + H(+) = pyruvate + CO2. The sequence is that of NAD-dependent malic enzyme 2 from Vibrio vulnificus (strain YJ016).